Reading from the N-terminus, the 296-residue chain is Protoheme IX farnesyltransferase (296 aa).

Residues 1-9 (MIFKQYLQV) are Cytoplasmic-facing. A helical transmembrane segment spans residues 10-28 (TKPGIIFGNLISVIGGFLL). Topologically, residues 29–37 (ASKGSIDYP) are periplasmic. A helical membrane pass occupies residues 38–56 (LFIYTLVGVSLVVASGCVF). The Cytoplasmic segment spans residues 57–78 (NNYIDRDIDRKMERTKNRVLVK). Residues 79 to 97 (GLISPAVSLVYATLLGIAG) form a helical membrane-spanning segment. The Periplasmic segment spans residues 98-107 (FMLLWFGANP). Residues 108–126 (LACWLGVMGFVVYVGVYSL) traverse the membrane as a helical segment. The Cytoplasmic segment spans residues 127–197 (YMKRHSVYGT…YQAANIPVLP (71 aa)). A helical transmembrane segment spans residues 198–216 (VVKGISVAKNHITLYIIAF). Over 217–228 (AVATLMLSLGGY) the chain is Periplasmic. Residues 229–247 (AGYKYLVVAAAVSVWWLGM) form a helical membrane-spanning segment. The Cytoplasmic segment spans residues 248–268 (ALRGYKVADDRIWARKLFGFS). The helical transmembrane segment at 269-287 (IIAITALSVMMSVDFMVPD) threads the bilayer. Topologically, residues 288-296 (SHTLLAAVW) are periplasmic.

It belongs to the UbiA prenyltransferase family. Protoheme IX farnesyltransferase subfamily.

Its subcellular location is the cell inner membrane. It carries out the reaction heme b + (2E,6E)-farnesyl diphosphate + H2O = Fe(II)-heme o + diphosphate. It participates in porphyrin-containing compound metabolism; heme O biosynthesis; heme O from protoheme: step 1/1. Functionally, converts heme B (protoheme IX) to heme O by substitution of the vinyl group on carbon 2 of heme B porphyrin ring with a hydroxyethyl farnesyl side group. This is Protoheme IX farnesyltransferase from Escherichia coli O1:K1 / APEC.